The following is a 250-amino-acid chain: 3-deoxy-manno-octulosonate cytidylyltransferase (250 aa).

This sequence belongs to the KdsB family.

It is found in the cytoplasm. The enzyme catalyses 3-deoxy-alpha-D-manno-oct-2-ulosonate + CTP = CMP-3-deoxy-beta-D-manno-octulosonate + diphosphate. It functions in the pathway nucleotide-sugar biosynthesis; CMP-3-deoxy-D-manno-octulosonate biosynthesis; CMP-3-deoxy-D-manno-octulosonate from 3-deoxy-D-manno-octulosonate and CTP: step 1/1. It participates in bacterial outer membrane biogenesis; lipopolysaccharide biosynthesis. Functionally, activates KDO (a required 8-carbon sugar) for incorporation into bacterial lipopolysaccharide in Gram-negative bacteria. This chain is 3-deoxy-manno-octulosonate cytidylyltransferase, found in Francisella tularensis subsp. tularensis (strain FSC 198).